Here is a 238-residue protein sequence, read N- to C-terminus: Small ribosomal subunit protein uS3 (238 aa).

One can recognise a KH type-2 domain in the interval 39–107; it reads MREFIHDYAK…ELHLNIVEIR (69 aa). Positions 212–222 are enriched in basic and acidic residues; the sequence is PQAHDRRHSEA. The disordered stretch occupies residues 212-238; sequence PQAHDRRHSEAQEGAAPRPPRRDRERA.

It belongs to the universal ribosomal protein uS3 family. Part of the 30S ribosomal subunit. Forms a tight complex with proteins S10 and S14.

Its function is as follows. Binds the lower part of the 30S subunit head. Binds mRNA in the 70S ribosome, positioning it for translation. This chain is Small ribosomal subunit protein uS3, found in Cereibacter sphaeroides (strain ATCC 17025 / ATH 2.4.3) (Rhodobacter sphaeroides).